Consider the following 311-residue polypeptide: MNAYSYMLIKNPDVNFEGITINGYVDLPGRIVQDQKNARSHAVTWDTKVKKQLLDTLNGIVEYDTTFDNYYETMVEAINTGDGETLKEGITDLRGEIQQNQKYAQQLIEELTKLRDSIGHDVRAFGSNKELLQSILKNQGADVDADQKRLEEVLGSVNYYKQLESDGFNVMKGAILGLPIIGGIIVGVARDNLGKLEPLLAELRQTVDYKVTLNRVVGVAYSNINEIDKALDDAINALTYMSTQWHDLDSQYSGVLGHIENAAQKADQNKFKFLKPNLNAAKDSWKTLRTDAVTLKEGIKELKVETVTPQK.

Residues 168–188 form a helical membrane-spanning segment; it reads FNVMKGAILGLPIIGGIIVGV.

The protein localises to the cell membrane. This is an uncharacterized protein from Edwardsiella tarda.